The following is a 62-amino-acid chain: Large ribosomal subunit protein eL24 (62 aa).

The Zn(2+) site is built by Cys6, Cys9, Cys32, and Cys36. The C4-type zinc finger occupies 6-36; it reads CSFCGADIPPGYGIMYVRSDGTVQRFCSRKC.

It belongs to the eukaryotic ribosomal protein eL24 family. As to quaternary structure, part of the 50S ribosomal subunit. Forms a cluster with proteins L3 and L14. Zn(2+) serves as cofactor.

Binds to the 23S rRNA. This is Large ribosomal subunit protein eL24 from Pyrobaculum calidifontis (strain DSM 21063 / JCM 11548 / VA1).